Reading from the N-terminus, the 239-residue chain is Phosphoribosylaminoimidazole-succinocarboxamide synthase (239 aa).

This sequence belongs to the SAICAR synthetase family.

The catalysed reaction is 5-amino-1-(5-phospho-D-ribosyl)imidazole-4-carboxylate + L-aspartate + ATP = (2S)-2-[5-amino-1-(5-phospho-beta-D-ribosyl)imidazole-4-carboxamido]succinate + ADP + phosphate + 2 H(+). It participates in purine metabolism; IMP biosynthesis via de novo pathway; 5-amino-1-(5-phospho-D-ribosyl)imidazole-4-carboxamide from 5-amino-1-(5-phospho-D-ribosyl)imidazole-4-carboxylate: step 1/2. The sequence is that of Phosphoribosylaminoimidazole-succinocarboxamide synthase from Brevibacillus brevis (strain 47 / JCM 6285 / NBRC 100599).